The primary structure comprises 286 residues: Probable aquaporin PIP2-5 (286 aa).

Met1 bears the N-acetylmethionine mark. Residues 1–18 (MTKEVVGDKRSFSGKDYQ) are compositionally biased toward basic and acidic residues. The segment at 1–23 (MTKEVVGDKRSFSGKDYQDPPPE) is disordered. The Cytoplasmic segment spans residues 1-38 (MTKEVVGDKRSFSGKDYQDPPPEPLFDATELGKWSFYR). Lys3 is modified (N6,N6-dimethyllysine). Residues 39-59 (ALIAEFIATLLFLYVTIMTVI) traverse the membrane as a helical segment. Residues 60–75 (GYKSQTDPALNPDQCT) are Extracellular-facing. A helical transmembrane segment spans residues 76–96 (GVGVLGIAWAFGGMIFILVYC). The Cytoplasmic portion of the chain corresponds to 97–124 (TAGISGGHINPAVTFGLLLARKVTLVRA). The NPA 1 signature appears at 106-108 (NPA). A helical transmembrane segment spans residues 125 to 145 (VMYMVAQCLGAICGVALVKAF). Over 146–165 (QSAYFTRYGGGANGLSDGYS) the chain is Extracellular. Residues 166 to 186 (IGTGVAAEIIGTFVLVYTVFS) form a helical membrane-spanning segment. At 187-200 (ATDPKRSARDSHVP) the chain is on the cytoplasmic side. A helical membrane pass occupies residues 201-221 (VLAPLPIGFAVFIVHLATIPI). Topologically, residues 222 to 248 (TGTGINPARSLGAAIIYNKDKAWDHHW) are extracellular. The short motif at 227–229 (NPA) is the NPA 2 element. Residues 249 to 269 (IFWVGPFAGAAIAAFYHQFVL) traverse the membrane as a helical segment. Residues 270–286 (RAGAIKALGSFRSQPHV) lie on the Cytoplasmic side of the membrane. Ser279 and Ser282 each carry phosphoserine.

Belongs to the MIP/aquaporin (TC 1.A.8) family. PIP (TC 1.A.8.11) subfamily. Expressed in green siliques.

The protein resides in the cell membrane. Functionally, aquaporins facilitate the transport of water and small neutral solutes across cell membranes. This chain is Probable aquaporin PIP2-5 (PIP2-5), found in Arabidopsis thaliana (Mouse-ear cress).